Consider the following 671-residue polypeptide: cGMP-dependent protein kinase 1 (671 aa).

S2 bears the N-acetylserine mark. Residues 2-59 (SELEEDFAKILMLKEERIKELEKRLSEKEEEIQELKRKLHKCQSVLPVPSTHIGPRTT) adopt a coiled-coil conformation. A required for dimerization region spans residues 2 to 102 (SELEEDFAKI…LIKEAILDND (101 aa)). Residues 9–44 (AKILMLKEERIKELEKRLSEKEEEIQELKRKLHKCQ) form a leucine-zipper region. An autoinhibitory domain region spans residues 50–75 (PSTHIGPRTTRAQGISAEPQTYRSFH). T59 carries the post-translational modification Phosphothreonine; by autocatalysis. The tract at residues 103–220 (FMKNLELSQI…EYMEFLKSVP (118 aa)) is cGMP-binding, high affinity. 3',5'-cyclic AMP contacts are provided by residues 167–170 (GELA) and 177–178 (RT). Residues 167-170 (GELA), 177-178 (RT), R282, 291-294 (GEKA), 301-302 (RT), and Y336 each bind 3',5'-cyclic GMP. Positions 221-341 (TFQSLPEEIL…SNKAYEDAEA (121 aa)) are cGMP-binding, low affinity. 3',5'-cyclic AMP is bound by residues 291-294 (GEKA), 301-302 (RT), and Y336. A Protein kinase domain is found at 360–619 (FNIIDTLGVG…VKDIQKHKWF (260 aa)). ATP contacts are provided by residues 366–374 (LGVGGFGRV) and K390. The Proton acceptor role is filled by D484. T515 is subject to Phosphothreonine. Residues 620-671 (EGFNWEGLRKGTLTPPIIPSVASPTDTSNFDSFPEDNDEPPPDDNSGWDIDF) form the AGC-kinase C-terminal domain. Positions 635–671 (PIIPSVASPTDTSNFDSFPEDNDEPPPDDNSGWDIDF) are disordered. The segment covering 652–661 (FPEDNDEPPP) has biased composition (acidic residues).

Belongs to the protein kinase superfamily. AGC Ser/Thr protein kinase family. cGMP subfamily. As to quaternary structure, isoform alpha: parallel homodimer or heterodimer and also heterotetramer. Interacts directly with PPP1R12A. Non-covalent dimer of dimer of PRKG1-PRKG1 and PPP1R12A-PPP1R12A. This interaction targets PRKG1 to stress fibers to mediate smooth muscle cell relaxation and vasodilation in responses to rises in cGMP. Isoform beta: antiparallel homodimer. Part of cGMP kinase signaling complex at least composed of ACTA2/alpha-actin, CNN1/calponin H1, PLN/phospholamban, PRKG1 and ITPR1. Interacts with IRAG1. Forms a stable complex with ITPR1, IRAG1, and isoform beta of PRKG1. Interacts with TRPC7 (via ankyrin repeat domain). Isoform alpha interacts with RGS2. Interacts with GTF2I. In terms of processing, autophosphorylation increases kinase activity. 65 kDa monomer is produced by proteolytic cleavage. In terms of tissue distribution, primarily expressed in lung and placenta.

The protein localises to the cytoplasm. The catalysed reaction is L-seryl-[protein] + ATP = O-phospho-L-seryl-[protein] + ADP + H(+). It catalyses the reaction L-threonyl-[protein] + ATP = O-phospho-L-threonyl-[protein] + ADP + H(+). With respect to regulation, in the absence of cGMP, PRKG1 activity is suppressed by autoinhibitory contacts. Functionally, serine/threonine protein kinase that acts as a key mediator of the nitric oxide (NO)/cGMP signaling pathway. GMP binding activates PRKG1, which phosphorylates serines and threonines on many cellular proteins. Numerous protein targets for PRKG1 phosphorylation are implicated in modulating cellular calcium, but the contribution of each of these targets may vary substantially among cell types. Proteins that are phosphorylated by PRKG1 regulate platelet activation and adhesion, smooth muscle contraction, cardiac function, gene expression, feedback of the NO-signaling pathway, and other processes involved in several aspects of the CNS like axon guidance, hippocampal and cerebellar learning, circadian rhythm and nociception. Smooth muscle relaxation is mediated through lowering of intracellular free calcium, by desensitization of contractile proteins to calcium, and by decrease in the contractile state of smooth muscle or in platelet activation. Regulates intracellular calcium levels via several pathways: phosphorylates IRAG1 and inhibits IP3-induced Ca(2+) release from intracellular stores, phosphorylation of KCNMA1 (BKCa) channels decreases intracellular Ca(2+) levels, which leads to increased opening of this channel. PRKG1 phosphorylates the canonical transient receptor potential channel (TRPC) family which inactivates the associated inward calcium current. Another mode of action of NO/cGMP/PKGI signaling involves PKGI-mediated inactivation of the Ras homolog gene family member A (RhoA). Phosphorylation of RHOA by PRKG1 blocks the action of this protein in myriad processes: regulation of RHOA translocation; decreasing contraction; controlling vesicle trafficking, reduction of myosin light chain phosphorylation resulting in vasorelaxation. Activation of PRKG1 by NO signaling also alters gene expression in a number of tissues. In smooth muscle cells, increased cGMP and PRKG1 activity influence expression of smooth muscle-specific contractile proteins, levels of proteins in the NO/cGMP signaling pathway, down-regulation of the matrix proteins osteopontin and thrombospondin-1 to limit smooth muscle cell migration and phenotype. Regulates vasodilator-stimulated phosphoprotein (VASP) functions in platelets and smooth muscle. The chain is cGMP-dependent protein kinase 1 (PRKG1) from Homo sapiens (Human).